The following is a 137-amino-acid chain: Methylglyoxal synthase (137 aa).

The MGS-like domain maps to 1–137 (MKIALIAHDK…NLVRGGEPNV (137 aa)). Substrate-binding positions include histidine 8, lysine 12, 34–37 (TGTT), and 54–55 (SG). Catalysis depends on aspartate 60, which acts as the Proton donor/acceptor. Substrate is bound at residue histidine 87.

This sequence belongs to the methylglyoxal synthase family.

The catalysed reaction is dihydroxyacetone phosphate = methylglyoxal + phosphate. Functionally, catalyzes the formation of methylglyoxal from dihydroxyacetone phosphate. This is Methylglyoxal synthase from Bacillus velezensis (strain DSM 23117 / BGSC 10A6 / LMG 26770 / FZB42) (Bacillus amyloliquefaciens subsp. plantarum).